The primary structure comprises 98 residues: Co-chaperonin GroES (98 aa).

Belongs to the GroES chaperonin family. In terms of assembly, heptamer of 7 subunits arranged in a ring. Interacts with the chaperonin GroEL.

It localises to the cytoplasm. Its function is as follows. Together with the chaperonin GroEL, plays an essential role in assisting protein folding. The GroEL-GroES system forms a nano-cage that allows encapsulation of the non-native substrate proteins and provides a physical environment optimized to promote and accelerate protein folding. GroES binds to the apical surface of the GroEL ring, thereby capping the opening of the GroEL channel. In Leifsonia xyli subsp. xyli (strain CTCB07), this protein is Co-chaperonin GroES.